The following is a 313-amino-acid chain: DNA-directed RNA polymerase subunit alpha (313 aa).

The tract at residues 1-226 is alpha N-terminal domain (alpha-NTD); the sequence is MLEIEKPKIE…EHLQLFVNLN (226 aa). The interval 243–313 is alpha C-terminal domain (alpha-CTD); that stretch reads KEKLAEMPIE…MGLSLRKEEE (71 aa).

Belongs to the RNA polymerase alpha chain family. As to quaternary structure, homodimer. The RNAP catalytic core consists of 2 alpha, 1 beta, 1 beta' and 1 omega subunit. When a sigma factor is associated with the core the holoenzyme is formed, which can initiate transcription.

The enzyme catalyses RNA(n) + a ribonucleoside 5'-triphosphate = RNA(n+1) + diphosphate. Its function is as follows. DNA-dependent RNA polymerase catalyzes the transcription of DNA into RNA using the four ribonucleoside triphosphates as substrates. In Carboxydothermus hydrogenoformans (strain ATCC BAA-161 / DSM 6008 / Z-2901), this protein is DNA-directed RNA polymerase subunit alpha.